A 121-amino-acid polypeptide reads, in one-letter code: Large ribosomal subunit protein mL52 (121 aa).

The N-terminal 22 residues, 1–22 (MAALGTWLSSVRRLHCSVVARA), are a transit peptide targeting the mitochondrion. Over residues 98–109 (QEERKKEHDLKP) the composition is skewed to basic and acidic residues. The tract at residues 98-121 (QEERKKEHDLKPKGTLLRSPLPNQ) is disordered.

The protein belongs to the mitochondrion-specific ribosomal protein mL52 family. Component of the mitochondrial ribosome large subunit (39S) which comprises a 16S rRNA and about 50 distinct proteins.

The protein localises to the mitochondrion. In Mus musculus (Mouse), this protein is Large ribosomal subunit protein mL52 (Mrpl52).